Consider the following 315-residue polypeptide: DNA-directed RNA polymerase subunit alpha (315 aa).

The segment at 1 to 228 (MIEMEKPKVE…EHLNLFITLK (228 aa)) is alpha N-terminal domain (alpha-NTD). The alpha C-terminal domain (alpha-CTD) stretch occupies residues 245-315 (KEKVLEMTIE…LGLGLRPSDE (71 aa)).

The protein belongs to the RNA polymerase alpha chain family. In terms of assembly, homodimer. The RNAP catalytic core consists of 2 alpha, 1 beta, 1 beta' and 1 omega subunit. When a sigma factor is associated with the core the holoenzyme is formed, which can initiate transcription.

The enzyme catalyses RNA(n) + a ribonucleoside 5'-triphosphate = RNA(n+1) + diphosphate. In terms of biological role, DNA-dependent RNA polymerase catalyzes the transcription of DNA into RNA using the four ribonucleoside triphosphates as substrates. This Alkaliphilus metalliredigens (strain QYMF) protein is DNA-directed RNA polymerase subunit alpha.